Here is a 256-residue protein sequence, read N- to C-terminus: Floral homeotic protein APETALA 1-1 (256 aa).

Residues 1 to 61 (MGRGRVQLKR…GKLFEYSTDS (61 aa)) enclose the MADS-box domain. Residues 88 to 178 (NTNWSMEYNR…SKQIKEREKV (91 aa)) form the K-box domain.

As to quaternary structure, homodimer capable of binding to CArG-box sequences. As to expression, expressed in some of the meristems of arrest-stage broccoli heads.

Its subcellular location is the nucleus. Functionally, transcription factor that promotes early floral meristem identity in synergy with LEAFY. Displays a redundant function with CAULIFLOWER in the up-regulation of LEAFY. Required subsequently for the transition of an inflorescence meristem into a floral meristem, and for the normal development of sepals and petals in flowers. Regulates positively B class homeotic proteins. In Brassica oleracea var. italica (Broccoli), this protein is Floral homeotic protein APETALA 1-1 (1AP1).